We begin with the raw amino-acid sequence, 108 residues long: Ribonuclease P protein component 4 (108 aa).

The Zn(2+) site is built by Cys-60, Cys-63, Cys-86, and Cys-89.

Belongs to the eukaryotic/archaeal RNase P protein component 4 family. In terms of assembly, consists of a catalytic RNA component and at least 4-5 protein subunits. The cofactor is Zn(2+).

The protein resides in the cytoplasm. It catalyses the reaction Endonucleolytic cleavage of RNA, removing 5'-extranucleotides from tRNA precursor.. Functionally, part of ribonuclease P, a protein complex that generates mature tRNA molecules by cleaving their 5'-ends. The sequence is that of Ribonuclease P protein component 4 from Sulfurisphaera tokodaii (strain DSM 16993 / JCM 10545 / NBRC 100140 / 7) (Sulfolobus tokodaii).